The following is a 457-amino-acid chain: UDP-glycosyltransferase 72C1 (457 aa).

UDP-alpha-D-glucose is bound by residues S272, 343 to 344, 361 to 369, and 383 to 386; these read WA, HCGWNSVLE, and YSEQ.

Belongs to the UDP-glycosyltransferase family.

This is UDP-glycosyltransferase 72C1 (UGT72C1) from Arabidopsis thaliana (Mouse-ear cress).